The sequence spans 348 residues: Phenylalanine--tRNA ligase alpha subunit (348 aa).

Glutamate 259 serves as a coordination point for Mg(2+).

It belongs to the class-II aminoacyl-tRNA synthetase family. Phe-tRNA synthetase alpha subunit type 1 subfamily. Tetramer of two alpha and two beta subunits. Mg(2+) is required as a cofactor.

Its subcellular location is the cytoplasm. It carries out the reaction tRNA(Phe) + L-phenylalanine + ATP = L-phenylalanyl-tRNA(Phe) + AMP + diphosphate + H(+). This is Phenylalanine--tRNA ligase alpha subunit from Levilactobacillus brevis (strain ATCC 367 / BCRC 12310 / CIP 105137 / JCM 1170 / LMG 11437 / NCIMB 947 / NCTC 947) (Lactobacillus brevis).